The chain runs to 132 residues: MAQHDYRELAAVFAGGALGSLARAALSALAAGDPASWPWPTFTVNIVGAFLVGYFTTRLLERLPTSSYRRPLLGTGFCGGLTTFSTMQVETLTMLEHHHWGLAAGYTLTSIAAGLLAVHLATKLVRRVRVRR.

4 consecutive transmembrane segments (helical) span residues 9–29 (LAAVFAGGALGSLARAALSAL), 35–55 (ASWPWPTFTVNIVGAFLVGYF), 72–89 (LLGTGFCGGLTTFSTMQV), and 100–120 (WGLAAGYTLTSIAAGLLAVHL). G79 and T82 together coordinate Na(+).

The protein belongs to the fluoride channel Fluc/FEX (TC 1.A.43) family.

Its subcellular location is the cell membrane. It carries out the reaction fluoride(in) = fluoride(out). Na(+) is not transported, but it plays an essential structural role and its presence is essential for fluoride channel function. Functionally, fluoride-specific ion channel. Important for reducing fluoride concentration in the cell, thus reducing its toxicity. This is Fluoride-specific ion channel FluC 1 from Mycolicibacterium paratuberculosis (strain ATCC BAA-968 / K-10) (Mycobacterium paratuberculosis).